The primary structure comprises 196 residues: Nucleoid occlusion factor SlmA (196 aa).

Residues 7–68 form the HTH tetR-type domain; sequence INRREEILQA…GLIEFIEESL (62 aa). A DNA-binding region (H-T-H motif) is located at residues 31–50; the sequence is TTAKLAKQVGVSEAALYRHF. Positions 110-139 form a coiled coil; the sequence is HALMFENERLRDRINQLFERIETSLRQILR.

It belongs to the nucleoid occlusion factor SlmA family. As to quaternary structure, homodimer. Interacts with FtsZ.

It localises to the cytoplasm. It is found in the nucleoid. Functionally, required for nucleoid occlusion (NO) phenomenon, which prevents Z-ring formation and cell division over the nucleoid. Acts as a DNA-associated cell division inhibitor that binds simultaneously chromosomal DNA and FtsZ, and disrupts the assembly of FtsZ polymers. SlmA-DNA-binding sequences (SBS) are dispersed on non-Ter regions of the chromosome, preventing FtsZ polymerization at these regions. The protein is Nucleoid occlusion factor SlmA of Vibrio cholerae serotype O1 (strain ATCC 39315 / El Tor Inaba N16961).